We begin with the raw amino-acid sequence, 440 residues long: NADH-quinone oxidoreductase subunit D 1 (440 aa).

This sequence belongs to the complex I 49 kDa subunit family. In terms of assembly, NDH-1 is composed of 14 different subunits. Subunits NuoB, C, D, E, F, and G constitute the peripheral sector of the complex.

It localises to the cell inner membrane. It catalyses the reaction a quinone + NADH + 5 H(+)(in) = a quinol + NAD(+) + 4 H(+)(out). Functionally, NDH-1 shuttles electrons from NADH, via FMN and iron-sulfur (Fe-S) centers, to quinones in the respiratory chain. The immediate electron acceptor for the enzyme in this species is believed to be a menaquinone. Couples the redox reaction to proton translocation (for every two electrons transferred, four hydrogen ions are translocated across the cytoplasmic membrane), and thus conserves the redox energy in a proton gradient. This is NADH-quinone oxidoreductase subunit D 1 from Chloroherpeton thalassium (strain ATCC 35110 / GB-78).